Here is a 287-residue protein sequence, read N- to C-terminus: ATP synthase gamma chain (287 aa).

The protein belongs to the ATPase gamma chain family. In terms of assembly, F-type ATPases have 2 components, CF(1) - the catalytic core - and CF(0) - the membrane proton channel. CF(1) has five subunits: alpha(3), beta(3), gamma(1), delta(1), epsilon(1). CF(0) has three main subunits: a, b and c.

The protein localises to the cell inner membrane. Functionally, produces ATP from ADP in the presence of a proton gradient across the membrane. The gamma chain is believed to be important in regulating ATPase activity and the flow of protons through the CF(0) complex. This is ATP synthase gamma chain from Tolumonas auensis (strain DSM 9187 / NBRC 110442 / TA 4).